The sequence spans 318 residues: TPR repeat-containing protein MJ0940 (318 aa).

TPR repeat units follow at residues 17–50 (SLTY…NPDF), 84–117 (PVAY…EEKF), 119–151 (TAFF…APNF), 152–185 (IPAY…KEND), 186–219 (TNAI…LNVT), 221–254 (IEVI…RPDD), 255–288 (ASLW…MPHH), and 289–318 (TKAL…ALDR).

The protein is TPR repeat-containing protein MJ0940 of Methanocaldococcus jannaschii (strain ATCC 43067 / DSM 2661 / JAL-1 / JCM 10045 / NBRC 100440) (Methanococcus jannaschii).